Here is a 191-residue protein sequence, read N- to C-terminus: MAP6 domain-containing protein 1 (191 aa).

3 S-palmitoyl cysteine lipidation sites follow: cysteine 5, cysteine 10, and cysteine 11. The tract at residues 31–106 (HGYSDPGSEE…RGQSSAPPTR (76 aa)) is disordered. Phosphoserine occurs at positions 38 and 41. Mn regions lie at residues 123-136 (TTSYRQEFQAWTGV) and 158-170 (DPSPGASFQVPEV). Serine 160 is modified (phosphoserine).

The protein belongs to the STOP family. Interacts with calmodulin. In terms of processing, palmitoylated. Palmitoylation enhances association with microtubules. In terms of tissue distribution, expressed in brain. Found in neurons in primary cultures, but absent in glial cells.

The protein resides in the golgi apparatus. It localises to the cytoplasm. The protein localises to the cytoskeleton. Functionally, may have microtubule-stabilizing activity. This is MAP6 domain-containing protein 1 (Map6d1) from Mus musculus (Mouse).